A 155-amino-acid chain; its full sequence is Small ribosomal subunit protein uS7c (155 aa).

This sequence belongs to the universal ribosomal protein uS7 family. As to quaternary structure, part of the 30S ribosomal subunit.

The protein localises to the plastid. Its subcellular location is the chloroplast. In terms of biological role, one of the primary rRNA binding proteins, it binds directly to 16S rRNA where it nucleates assembly of the head domain of the 30S subunit. This is Small ribosomal subunit protein uS7c (rps7) from Saururus cernuus (Lizard's tail).